The following is a 144-amino-acid chain: TSC22 domain family protein 1 (144 aa).

Positions 77-98 are leucine-zipper; that stretch reads LKEQIKELIEKNSQLEQENNLL. Positions 109–144 are disordered; the sequence is QFQAQLQTGSPPATTQPQGSTQPPAQPASQGSGPTA.

This sequence belongs to the TSC-22/Dip/Bun family. As to quaternary structure, forms homodimers. Forms a heterodimer with TSC22D4/THG1. Interacts with histone H1-2. Interacts with GNL3.

Its subcellular location is the cytoplasm. The protein localises to the nucleus. It localises to the mitochondrion. In terms of biological role, transcriptional repressor. Plays a role in the repression of hematopoietic precursor cell growth. Promotes IL2 deprivation-induced apoptosis in T-lymphocytes, via repression of TSC22D3/GILZ transcription and activation of the caspase cascade. Positively regulates cell death in response to TGFB3 during mammary gland involution. This is TSC22 domain family protein 1 from Bathyergus suillus (Cape dune mole rat).